Here is a 266-residue protein sequence, read N- to C-terminus: MKIGRFVIEGNAAIMGILNVTPDSFSDGGSYTTVQKALDHVEQMIADGAKIIDVGGESTRPGCQFVSATDEIDRVVPVIKAIKENYDILISIDTYKTETARAALEAGADILNDVWAGLYDGQMFALAAEYDAPIILMHNQDEEVYQEVTQDVCDFLGNRAQAALDAGVPKNNIWIDPGFGFAKSVQQNTELLKGLDRVCQLGYPVLFGISRKRVVDALLGGNTKAKERDGATAALSAYALGKGCQIVRVHDVKANQDIVAVLSQLM.

Positions 12 to 260 constitute a Pterin-binding domain; sequence AAIMGILNVT…DVKANQDIVA (249 aa). Asn19 contributes to the Mg(2+) binding site. Residues Thr59, Asp93, Asn112, Asp176, Lys212, and 248–250 each bind (7,8-dihydropterin-6-yl)methyl diphosphate; that span reads RVH.

The protein belongs to the DHPS family. In terms of assembly, homodimer or homotrimer. It depends on Mg(2+) as a cofactor.

The catalysed reaction is (7,8-dihydropterin-6-yl)methyl diphosphate + 4-aminobenzoate = 7,8-dihydropteroate + diphosphate. Its pathway is cofactor biosynthesis; tetrahydrofolate biosynthesis; 7,8-dihydrofolate from 2-amino-4-hydroxy-6-hydroxymethyl-7,8-dihydropteridine diphosphate and 4-aminobenzoate: step 1/2. In terms of biological role, catalyzes the condensation of para-aminobenzoate (pABA) with 6-hydroxymethyl-7,8-dihydropterin diphosphate (DHPt-PP) to form 7,8-dihydropteroate (H2Pte), the immediate precursor of folate derivatives. The sequence is that of Dihydropteroate synthase (folP) from Streptococcus pyogenes serotype M18 (strain MGAS8232).